The primary structure comprises 299 residues: Probable lipid kinase YegS (299 aa).

A DAGKc domain is found at 2–133 (AEFPASLLIL…IDMAQVNKQT (132 aa)). ATP is bound by residues threonine 40, 66–72 (GDGTINE), and threonine 95. The Mg(2+) site is built by leucine 215, aspartate 218, and leucine 220. Glutamate 271 (proton acceptor) is an active-site residue.

It belongs to the diacylglycerol/lipid kinase family. YegS lipid kinase subfamily. Requires Mg(2+) as cofactor. It depends on Ca(2+) as a cofactor.

The protein resides in the cytoplasm. Its function is as follows. Probably phosphorylates lipids; the in vivo substrate is unknown. The polypeptide is Probable lipid kinase YegS (Escherichia coli (strain K12 / MC4100 / BW2952)).